The primary structure comprises 158 residues: Cyclic pyranopterin monophosphate synthase (158 aa).

Residues 74-76 (MCH) and 112-113 (ME) each bind substrate. Asp-127 is an active-site residue.

The protein belongs to the MoaC family. As to quaternary structure, homohexamer; trimer of dimers.

The catalysed reaction is (8S)-3',8-cyclo-7,8-dihydroguanosine 5'-triphosphate = cyclic pyranopterin phosphate + diphosphate. Its pathway is cofactor biosynthesis; molybdopterin biosynthesis. Catalyzes the conversion of (8S)-3',8-cyclo-7,8-dihydroguanosine 5'-triphosphate to cyclic pyranopterin monophosphate (cPMP). The protein is Cyclic pyranopterin monophosphate synthase of Helicobacter pylori (strain P12).